The following is a 633-amino-acid chain: Guanylate-binding protein 6 (633 aa).

Residues 1–310 (MESGPKMLAP…EAVNSGAVPC (310 aa)) are GTPase domain (Globular). One can recognise a GB1/RHD3-type G domain in the interval 35 to 277 (SQPVVVVAIV…FSSYIFTHAR (243 aa)). GTP contacts are provided by residues 45–52 (GLYRTGKS), 67–69 (LGS), and 97–101 (DTEGL).

The protein belongs to the TRAFAC class dynamin-like GTPase superfamily. GB1/RHD3 GTPase family. GB1 subfamily.

Its subcellular location is the cytoplasmic vesicle. The enzyme catalyses GTP + H2O = GDP + phosphate + H(+). In terms of biological role, interferon (IFN)-inducible GTPase that plays important roles in innate immunity against a diverse range of bacterial, viral and protozoan pathogens, such as bacterial pathogens Listeria monocytogenes and Mycobacterium bovis BCG as well as the protozoan pathogen Toxoplasma gondii. Confers protection to several pathogens, including the bacterial pathogens Listeria monocytogenes and Mycobacterium bovis BCG as well as the protozoan pathogen Toxoplasma gondii. This Pongo abelii (Sumatran orangutan) protein is Guanylate-binding protein 6 (GBP6).